Here is an 806-residue protein sequence, read N- to C-terminus: Acetyl-CoA decarbonylase/synthase complex subunit alpha 1 (806 aa).

Cys73, Cys76, Cys77, Cys79, Cys84, and Cys94 together coordinate [4Fe-4S] cluster. Residue His117 coordinates CO. Positions 250, 278, and 323 each coordinate [Ni-4Fe-4S] cluster. 2 consecutive 4Fe-4S ferredoxin-type domains span residues 407–436 (DEEFADWVAKCADCGACMIACPEELDIPEA) and 446–475 (SYLEELHDQCIGCRRCEQVCKKEIPILNII). Cys417, Cys420, Cys423, Cys427, Cys455, Cys458, Cys461, and Cys465 together coordinate [4Fe-4S] cluster. Cys523, Cys552, and Cys587 together coordinate [Ni-4Fe-4S] cluster.

Belongs to the Ni-containing carbon monoxide dehydrogenase family. Heterotetramer of two alpha and two epsilon subunits. The ACDS complex is made up of alpha, epsilon, beta, gamma and delta subunits with a probable stoichiometry of (alpha(2)epsilon(2))(4)-beta(8)-(gamma(1)delta(1))(8). The cofactor is [4Fe-4S] cluster. [Ni-4Fe-4S] cluster is required as a cofactor.

It carries out the reaction CO + 2 oxidized [2Fe-2S]-[ferredoxin] + H2O = 2 reduced [2Fe-2S]-[ferredoxin] + CO2 + 2 H(+). The protein operates within one-carbon metabolism; methanogenesis from acetate. Part of the ACDS complex that catalyzes the reversible cleavage of acetyl-CoA, allowing growth on acetate as sole source of carbon and energy. The alpha-epsilon subcomponent functions as a carbon monoxide dehydrogenase. This is Acetyl-CoA decarbonylase/synthase complex subunit alpha 1 from Methanosarcina acetivorans (strain ATCC 35395 / DSM 2834 / JCM 12185 / C2A).